The sequence spans 492 residues: Cysteine--tRNA ligase (492 aa).

Cys-35 is a Zn(2+) binding site. Residues 37–47 (PTVYSNVHLGN) carry the 'HIGH' region motif. Residues Cys-230, His-255, and Glu-259 each coordinate Zn(2+). The 'KMSKS' region motif lies at 287 to 291 (KMAKS). ATP is bound at residue Lys-290.

This sequence belongs to the class-I aminoacyl-tRNA synthetase family. As to quaternary structure, monomer. Zn(2+) is required as a cofactor.

It is found in the cytoplasm. The catalysed reaction is tRNA(Cys) + L-cysteine + ATP = L-cysteinyl-tRNA(Cys) + AMP + diphosphate. This is Cysteine--tRNA ligase from Flavobacterium johnsoniae (strain ATCC 17061 / DSM 2064 / JCM 8514 / BCRC 14874 / CCUG 350202 / NBRC 14942 / NCIMB 11054 / UW101) (Cytophaga johnsonae).